The following is a 264-amino-acid chain: Movement protein (264 aa).

A disordered region spans residues tyrosine 221 to threonine 264. Basic residues predominate over residues arginine 231–asparagine 240.

It belongs to the tobamovirus movement protein family.

The protein resides in the host cytoplasm. Its subcellular location is the host cytoskeleton. It is found in the host cell junction. It localises to the host plasmodesma. In terms of biological role, transports viral genome to neighboring plant cells directly through plasmosdesmata, without any budding. The movement protein allows efficient cell to cell propagation, by bypassing the host cell wall barrier. Forms a ribonucleoprotein complex with viral RNA. Binds microtubules and modulates microtubule stability. Can bind double-stranded DNA. This chain is Movement protein (MP), found in Citrullus (Cucumber).